The sequence spans 795 residues: Histidine biosynthesis trifunctional protein (795 aa).

Residues 1-225 form a phosphoribosyl-AMP cyclohydrolase region; sequence MLPVVPVFNA…VVRQGGSGSF (225 aa). A phosphoribosyl-ATP pyrophosphohydrolase region spans residues 226–308; sequence CHLETESCFG…FYFAMARLVA (83 aa). Positions 309 to 795 are histidinol dehydrogenase; it reads NGVSLEDVER…KLGLLPSGFE (487 aa). The Zn(2+) site is built by Gln614 and His617. Catalysis depends on residues Glu683 and His684. Zn(2+)-binding residues include Asp717 and His776.

It in the C-terminal section; belongs to the histidinol dehydrogenase family. It depends on Zn(2+) as a cofactor.

The enzyme catalyses 1-(5-phospho-beta-D-ribosyl)-5'-AMP + H2O = 1-(5-phospho-beta-D-ribosyl)-5-[(5-phospho-beta-D-ribosylamino)methylideneamino]imidazole-4-carboxamide. It carries out the reaction 1-(5-phospho-beta-D-ribosyl)-ATP + H2O = 1-(5-phospho-beta-D-ribosyl)-5'-AMP + diphosphate + H(+). It catalyses the reaction L-histidinol + 2 NAD(+) + H2O = L-histidine + 2 NADH + 3 H(+). It functions in the pathway amino-acid biosynthesis; L-histidine biosynthesis; L-histidine from 5-phospho-alpha-D-ribose 1-diphosphate: step 2/9. The protein operates within amino-acid biosynthesis; L-histidine biosynthesis; L-histidine from 5-phospho-alpha-D-ribose 1-diphosphate: step 3/9. It participates in amino-acid biosynthesis; L-histidine biosynthesis; L-histidine from 5-phospho-alpha-D-ribose 1-diphosphate: step 9/9. This chain is Histidine biosynthesis trifunctional protein (HIS4), found in Kluyveromyces lactis (strain ATCC 8585 / CBS 2359 / DSM 70799 / NBRC 1267 / NRRL Y-1140 / WM37) (Yeast).